The primary structure comprises 533 residues: Peptide chain release factor 3 (533 aa).

Positions 9 to 284 constitute a tr-type G domain; it reads ARRRTFAIIS…ALCELSPPPL (276 aa). Residues 18–25, 95–99, and 149–152 each bind GTP; these read SHPDAGKT, DTPGH, and NKLD.

Belongs to the TRAFAC class translation factor GTPase superfamily. Classic translation factor GTPase family. PrfC subfamily.

The protein resides in the cytoplasm. Increases the formation of ribosomal termination complexes and stimulates activities of RF-1 and RF-2. It binds guanine nucleotides and has strong preference for UGA stop codons. It may interact directly with the ribosome. The stimulation of RF-1 and RF-2 is significantly reduced by GTP and GDP, but not by GMP. This chain is Peptide chain release factor 3, found in Cupriavidus taiwanensis (strain DSM 17343 / BCRC 17206 / CCUG 44338 / CIP 107171 / LMG 19424 / R1) (Ralstonia taiwanensis (strain LMG 19424)).